The primary structure comprises 141 residues: Hemoglobin subunit alpha (141 aa).

In terms of domain architecture, Globin spans 1–141; the sequence is VLSPADKTNL…VSTVLTSKYR (141 aa). At Ser-3 the chain carries Phosphoserine. Lys-7 carries the N6-succinyllysine modification. Thr-8 carries the post-translational modification Phosphothreonine. Lys-11 carries the post-translational modification N6-succinyllysine. An N6-acetyllysine; alternate modification is found at Lys-16. Residue Lys-16 is modified to N6-succinyllysine; alternate. Tyr-24 carries the phosphotyrosine modification. Lys-40 is modified (N6-succinyllysine). Ser-49 carries the post-translational modification Phosphoserine. An O2-binding site is contributed by His-58. His-87 lines the heme b pocket. The residue at position 102 (Ser-102) is a Phosphoserine. Phosphothreonine is present on Thr-108. The residue at position 124 (Ser-124) is a Phosphoserine. Phosphothreonine occurs at positions 134 and 137. Ser-138 is subject to Phosphoserine.

The protein belongs to the globin family. Heterotetramer of two alpha chains and two beta chains. Red blood cells.

In terms of biological role, involved in oxygen transport from the lung to the various peripheral tissues. The chain is Hemoglobin subunit alpha from Tamias striatus (Eastern chipmunk).